The following is a 125-amino-acid chain: Small ribosomal subunit protein uS12 (125 aa).

The segment at 9–31 (RQGREVEKIKSKSPAMENSPQRR) is disordered. Asp89 is subject to 3-methylthioaspartic acid.

Belongs to the universal ribosomal protein uS12 family. Part of the 30S ribosomal subunit. Contacts proteins S8 and S17. May interact with IF1 in the 30S initiation complex.

In terms of biological role, with S4 and S5 plays an important role in translational accuracy. Its function is as follows. Interacts with and stabilizes bases of the 16S rRNA that are involved in tRNA selection in the A site and with the mRNA backbone. Located at the interface of the 30S and 50S subunits, it traverses the body of the 30S subunit contacting proteins on the other side and probably holding the rRNA structure together. The combined cluster of proteins S8, S12 and S17 appears to hold together the shoulder and platform of the 30S subunit. The chain is Small ribosomal subunit protein uS12 from Verminephrobacter eiseniae (strain EF01-2).